A 212-amino-acid chain; its full sequence is Large ribosomal subunit protein uL3 (212 aa).

Residue Gln-153 is modified to N5-methylglutamine.

The protein belongs to the universal ribosomal protein uL3 family. In terms of assembly, part of the 50S ribosomal subunit. Forms a cluster with proteins L14 and L19. Methylated by PrmB.

Functionally, one of the primary rRNA binding proteins, it binds directly near the 3'-end of the 23S rRNA, where it nucleates assembly of the 50S subunit. The sequence is that of Large ribosomal subunit protein uL3 from Dechloromonas aromatica (strain RCB).